We begin with the raw amino-acid sequence, 299 residues long: UTP--glucose-1-phosphate uridylyltransferase (299 aa).

It belongs to the UDPGP type 2 family.

The enzyme catalyses alpha-D-glucose 1-phosphate + UTP + H(+) = UDP-alpha-D-glucose + diphosphate. Its pathway is carbohydrate metabolism; nucleotide-sugar metabolism. It functions in the pathway capsule biogenesis; capsule polysaccharide biosynthesis. The chain is UTP--glucose-1-phosphate uridylyltransferase (cap4C) from Streptococcus pneumoniae serotype 4 (strain ATCC BAA-334 / TIGR4).